Reading from the N-terminus, the 106-residue chain is uncharacterized protein (106 aa).

This is an uncharacterized protein from Mycoplasma pneumoniae (strain ATCC 29342 / M129 / Subtype 1) (Mycoplasmoides pneumoniae).